We begin with the raw amino-acid sequence, 236 residues long: MPAYKRILLKLSGEALMGDDAFGINRATIVRMVEEIAEVTRMGVQVAVVIGGGNIFRGVAGGSVGMDRATADYMGMLATVMNALALGDTMDKAGLVARVMSAIGIERVVEPYVRPKALQYLEEGKVVVFAAGTGNPFFTTDTAAALRGAEIGAEIVLKATKVDGVYSADPKKDPEATRYTSITFDEVIGKNLEVMDATAFALCRDQKLPIKIFSIFKLGALRRVVMGEDEGTLVHV.

Residue 10–13 participates in ATP binding; sequence KLSG. G52 serves as a coordination point for UMP. G53 and R57 together coordinate ATP. UMP is bound by residues D72 and 133–140; that span reads TGNPFFTT. T160, Y166, and D169 together coordinate ATP.

It belongs to the UMP kinase family. In terms of assembly, homohexamer.

The protein resides in the cytoplasm. It carries out the reaction UMP + ATP = UDP + ADP. Its pathway is pyrimidine metabolism; CTP biosynthesis via de novo pathway; UDP from UMP (UMPK route): step 1/1. With respect to regulation, inhibited by UTP. Its function is as follows. Catalyzes the reversible phosphorylation of UMP to UDP. This Polaromonas naphthalenivorans (strain CJ2) protein is Uridylate kinase.